Consider the following 475-residue polypeptide: UDP-N-acetylmuramate--L-alanine ligase (475 aa).

An ATP-binding site is contributed by 118-124 (GTHGKTT).

This sequence belongs to the MurCDEF family.

The protein resides in the cytoplasm. The catalysed reaction is UDP-N-acetyl-alpha-D-muramate + L-alanine + ATP = UDP-N-acetyl-alpha-D-muramoyl-L-alanine + ADP + phosphate + H(+). It participates in cell wall biogenesis; peptidoglycan biosynthesis. Cell wall formation. This Thermosynechococcus vestitus (strain NIES-2133 / IAM M-273 / BP-1) protein is UDP-N-acetylmuramate--L-alanine ligase.